Consider the following 697-residue polypeptide: Lebercilin (697 aa).

The disordered stretch occupies residues 1 to 90; sequence MGERAGSPGT…VGFRSQSLNR (90 aa). Residues Ser7 and Ser45 each carry the phosphoserine modification. Residues 32 to 45 show a composition bias toward low complexity; sequence SSGRSSLVSSSPAS. 2 coiled-coil regions span residues 103 to 297 and 389 to 485; these read RILS…IKNI and EEKF…RNLK. Disordered stretches follow at residues 412-432, 522-548, and 606-697; these read WERE…EREE, HHLQ…PASP, and EQLF…VALR. Basic and acidic residues predominate over residues 416–432; it reads ELDKKQKEKASLLEREE. Positions 527 to 547 are enriched in polar residues; the sequence is ISFSTPKGEGQNSGNVRSPAS. The segment covering 612-626 has biased composition (low complexity); sequence SGSSTISSKSSDPNS. The span at 686–697 shows a compositional bias: acidic residues; the sequence is SVEDEIEEVALR.

It belongs to the LCA5 family. In terms of assembly, interacts with NINL. Interacts with OFD1. Interacts with FAM161A. Interacts with components of the IFT complex B. As to expression, widely expressed.

The protein resides in the cytoplasm. The protein localises to the cytoskeleton. It is found in the cilium axoneme. Its subcellular location is the cilium basal body. It localises to the microtubule organizing center. The protein resides in the centrosome. The protein localises to the cell projection. It is found in the cilium. In terms of biological role, involved in intraflagellar protein (IFT) transport in photoreceptor cilia. In Homo sapiens (Human), this protein is Lebercilin (LCA5).